The following is a 153-amino-acid chain: Endoribonuclease YbeY (153 aa).

H114, H118, and H124 together coordinate Zn(2+).

It belongs to the endoribonuclease YbeY family. Zn(2+) is required as a cofactor.

The protein resides in the cytoplasm. Single strand-specific metallo-endoribonuclease involved in late-stage 70S ribosome quality control and in maturation of the 3' terminus of the 16S rRNA. In Shewanella baltica (strain OS155 / ATCC BAA-1091), this protein is Endoribonuclease YbeY.